A 173-amino-acid polypeptide reads, in one-letter code: Crossover junction endodeoxyribonuclease RuvC (173 aa).

Active-site residues include D8, E67, and D139. The Mg(2+) site is built by D8, E67, and D139.

This sequence belongs to the RuvC family. As to quaternary structure, homodimer which binds Holliday junction (HJ) DNA. The HJ becomes 2-fold symmetrical on binding to RuvC with unstacked arms; it has a different conformation from HJ DNA in complex with RuvA. In the full resolvosome a probable DNA-RuvA(4)-RuvB(12)-RuvC(2) complex forms which resolves the HJ. Mg(2+) is required as a cofactor.

The protein resides in the cytoplasm. The catalysed reaction is Endonucleolytic cleavage at a junction such as a reciprocal single-stranded crossover between two homologous DNA duplexes (Holliday junction).. Functionally, the RuvA-RuvB-RuvC complex processes Holliday junction (HJ) DNA during genetic recombination and DNA repair. Endonuclease that resolves HJ intermediates. Cleaves cruciform DNA by making single-stranded nicks across the HJ at symmetrical positions within the homologous arms, yielding a 5'-phosphate and a 3'-hydroxyl group; requires a central core of homology in the junction. The consensus cleavage sequence is 5'-(A/T)TT(C/G)-3'. Cleavage occurs on the 3'-side of the TT dinucleotide at the point of strand exchange. HJ branch migration catalyzed by RuvA-RuvB allows RuvC to scan DNA until it finds its consensus sequence, where it cleaves and resolves the cruciform DNA. This Shewanella woodyi (strain ATCC 51908 / MS32) protein is Crossover junction endodeoxyribonuclease RuvC.